The primary structure comprises 83 residues: MSAKNNIQDQLLNTARKEKIDLTIYLLNGVPLKGKVVSFDNFTIILENENKQNLVYKHAISTIIPAKPIKLHSEETPKEAGGV.

The 61-residue stretch at 9 to 69 (DQLLNTARKE…ISTIIPAKPI (61 aa)) folds into the Sm domain.

Belongs to the Hfq family. As to quaternary structure, homohexamer.

Its function is as follows. RNA chaperone that binds small regulatory RNA (sRNAs) and mRNAs to facilitate mRNA translational regulation in response to envelope stress, environmental stress and changes in metabolite concentrations. Also binds with high specificity to tRNAs. This is RNA-binding protein Hfq from Leptospira biflexa serovar Patoc (strain Patoc 1 / Ames).